A 932-amino-acid polypeptide reads, in one-letter code: Protocadherin gamma-A2 (932 aa).

The first 28 residues, 1–28 (MAALQKLPHCRKLFLLCFLLATLWEARA), serve as a signal peptide directing secretion. Cadherin domains follow at residues 29-133 (GQIR…APRF), 134-242 (GVEE…APVF), 243-347 (TQPE…APEF), 348-452 (YMTS…APAF), 453-562 (SRTS…PPEI), and 570-682 (DGST…EPSA). At 29–692 (GQIRYSVREE…KPNDSDLTLY (664 aa)) the chain is on the extracellular side. N-linked (GlcNAc...) asparagine glycosylation is found at asparagine 419 and asparagine 545. A glycan (N-linked (GlcNAc...) asparagine) is linked at asparagine 685. Residues 693-713 (LVVAVAAVSCVFLAFVIVLLA) traverse the membrane as a helical segment. The Cytoplasmic segment spans residues 714 to 932 (HRLRRWHKSR…KKKSGKKEKK (219 aa)). 2 disordered regions span residues 798-841 (LEEE…WPNN) and 902-932 (ATLT…KEKK). Over residues 806-841 (FSQQAPPNTDWRFSQAQRPGTSGSQNGDDTGTWPNN) the composition is skewed to polar residues. A compositionally biased stretch (basic residues) spans 922–932 (NKKKSGKKEKK).

It is found in the cell membrane. In terms of biological role, potential calcium-dependent cell-adhesion protein. May be involved in the establishment and maintenance of specific neuronal connections in the brain. The polypeptide is Protocadherin gamma-A2 (PCDHGA2) (Pan troglodytes (Chimpanzee)).